The primary structure comprises 530 residues: Glucose-6-phosphate isomerase (530 aa).

Glu356 serves as the catalytic Proton donor. Catalysis depends on residues His387 and Lys502.

It belongs to the GPI family.

It is found in the cytoplasm. It catalyses the reaction alpha-D-glucose 6-phosphate = beta-D-fructose 6-phosphate. It functions in the pathway carbohydrate biosynthesis; gluconeogenesis. Its pathway is carbohydrate degradation; glycolysis; D-glyceraldehyde 3-phosphate and glycerone phosphate from D-glucose: step 2/4. Functionally, catalyzes the reversible isomerization of glucose-6-phosphate to fructose-6-phosphate. The chain is Glucose-6-phosphate isomerase from Borreliella burgdorferi (strain ATCC 35210 / DSM 4680 / CIP 102532 / B31) (Borrelia burgdorferi).